A 324-amino-acid chain; its full sequence is Endochitinase A2 (324 aa).

A signal peptide spans 1–20; the sequence is MSKLRIPILLVLFIVSCCSA. One can recognise a Chitin-binding type-1 domain in the interval 21–61; sequence EQCGTQAGGALCPGGLCCSKFGWCGSTSEYCGDGCQSQCSG. 4 cysteine pairs are disulfide-bonded: C23-C38, C32-C44, C37-C51, and C55-C59. E133 serves as the catalytic Proton donor. 2 disulfides stabilise this stretch: C151–C170 and C269–C301. The propeptide at 310-324 is removed in mature form; that stretch reads SLPLSSILLDTVAAA.

This sequence belongs to the glycosyl hydrolase 19 family. Chitinase class I subfamily.

It catalyses the reaction Random endo-hydrolysis of N-acetyl-beta-D-glucosaminide (1-&gt;4)-beta-linkages in chitin and chitodextrins.. In terms of biological role, defense against chitin-containing fungal pathogens. The chain is Endochitinase A2 (CHI2) from Pisum sativum (Garden pea).